Consider the following 149-residue polypeptide: Deoxyuridine 5'-triphosphate nucleotidohydrolase (149 aa).

Substrate contacts are provided by residues 68–70, N81, and 85–87; these read RSG and LID.

The protein belongs to the dUTPase family. The cofactor is Mg(2+).

It catalyses the reaction dUTP + H2O = dUMP + diphosphate + H(+). Its pathway is pyrimidine metabolism; dUMP biosynthesis; dUMP from dCTP (dUTP route): step 2/2. This enzyme is involved in nucleotide metabolism: it produces dUMP, the immediate precursor of thymidine nucleotides and it decreases the intracellular concentration of dUTP so that uracil cannot be incorporated into DNA. This is Deoxyuridine 5'-triphosphate nucleotidohydrolase from Aromatoleum aromaticum (strain DSM 19018 / LMG 30748 / EbN1) (Azoarcus sp. (strain EbN1)).